The sequence spans 89 residues: UPF0175 protein ssl1255 (89 aa).

The protein belongs to the UPF0175 family.

The sequence is that of UPF0175 protein ssl1255 from Synechocystis sp. (strain ATCC 27184 / PCC 6803 / Kazusa).